The primary structure comprises 410 residues: Probable peptidoglycan glycosyltransferase FtsW (410 aa).

Transmembrane regions (helical) follow at residues 39–59, 78–98, 108–128, 177–197, 198–218, 221–241, 303–323, 342–362, and 374–394; these read LDPL…VMVY, YFLL…LAAF, FAPW…IPGV, GFLP…GEPD, FGAF…GGIN, VFAL…WLSP, IAEE…AILI, GLVA…NMGV, and LPLM…LAIL.

Belongs to the SEDS family. FtsW subfamily.

Its subcellular location is the cell inner membrane. It carries out the reaction [GlcNAc-(1-&gt;4)-Mur2Ac(oyl-L-Ala-gamma-D-Glu-L-Lys-D-Ala-D-Ala)](n)-di-trans,octa-cis-undecaprenyl diphosphate + beta-D-GlcNAc-(1-&gt;4)-Mur2Ac(oyl-L-Ala-gamma-D-Glu-L-Lys-D-Ala-D-Ala)-di-trans,octa-cis-undecaprenyl diphosphate = [GlcNAc-(1-&gt;4)-Mur2Ac(oyl-L-Ala-gamma-D-Glu-L-Lys-D-Ala-D-Ala)](n+1)-di-trans,octa-cis-undecaprenyl diphosphate + di-trans,octa-cis-undecaprenyl diphosphate + H(+). It participates in cell wall biogenesis; peptidoglycan biosynthesis. In terms of biological role, peptidoglycan polymerase that is essential for cell division. This Aromatoleum aromaticum (strain DSM 19018 / LMG 30748 / EbN1) (Azoarcus sp. (strain EbN1)) protein is Probable peptidoglycan glycosyltransferase FtsW.